A 270-amino-acid polypeptide reads, in one-letter code: Aliphatic sulfonates import ATP-binding protein SsuB 3 (270 aa).

In terms of domain architecture, ABC transporter spans 17–238 (LAVRKLKKAF…VRGSHRLAAL (222 aa)). Position 49-56 (49-56 (GRSGCGKS)) interacts with ATP.

The protein belongs to the ABC transporter superfamily. Aliphatic sulfonates importer (TC 3.A.1.17.2) family. In terms of assembly, the complex is composed of two ATP-binding proteins (SsuB), two transmembrane proteins (SsuC) and a solute-binding protein (SsuA).

Its subcellular location is the cell inner membrane. It carries out the reaction ATP + H2O + aliphatic sulfonate-[sulfonate-binding protein]Side 1 = ADP + phosphate + aliphatic sulfonateSide 2 + [sulfonate-binding protein]Side 1.. Its function is as follows. Part of the ABC transporter complex SsuABC involved in aliphatic sulfonates import. Responsible for energy coupling to the transport system. This is Aliphatic sulfonates import ATP-binding protein SsuB 3 from Pseudomonas syringae pv. syringae (strain B728a).